Here is a 327-residue protein sequence, read N- to C-terminus: Phenylalanine--tRNA ligase alpha subunit (327 aa).

E252 provides a ligand contact to Mg(2+).

Belongs to the class-II aminoacyl-tRNA synthetase family. Phe-tRNA synthetase alpha subunit type 1 subfamily. In terms of assembly, tetramer of two alpha and two beta subunits. The cofactor is Mg(2+).

Its subcellular location is the cytoplasm. It carries out the reaction tRNA(Phe) + L-phenylalanine + ATP = L-phenylalanyl-tRNA(Phe) + AMP + diphosphate + H(+). This chain is Phenylalanine--tRNA ligase alpha subunit, found in Escherichia coli O139:H28 (strain E24377A / ETEC).